A 392-amino-acid chain; its full sequence is Keratin, type I cuticular Ha4 (392 aa).

A head region spans residues 1–56 (MSCESCLPALSCRTSCSSRPCVPPSCHGCTLPGACNIPANVGNCNWFCEGSFNGNE). In terms of domain architecture, IF rod spans 56–367 (EKETMQFLND…SLLESEDCNL (312 aa)). The segment at 57-91 (KETMQFLNDRLASYMEKVRQLERENAELECRIQER) is coil 1A. The interval 92–102 (NQQQDPLVCPA) is linker 1. The coil 1B stretch occupies residues 103-203 (YQAYFRTIEE…HEEEVNTLRC (101 aa)). The tract at residues 204-219 (QLGDRLNVEVDAAPTV) is linker 12. A coil 2 region spans residues 220–363 (DLNRVLNETR…NTYRSLLESE (144 aa)). The segment at 364-392 (DCNLPCNPCATTNASGSCCGPCGSSKRCC) is tail.

Belongs to the intermediate filament family. Expressed in the hair root in the hair shaft cuticle and cortex.

In Mus musculus (Mouse), this protein is Keratin, type I cuticular Ha4.